We begin with the raw amino-acid sequence, 487 residues long: Betaine aldehyde dehydrogenase (487 aa).

Residues Ser26 and Asp93 each contribute to the K(+) site. 150–152 (GAW) is a binding site for NAD(+). The active-site Charge relay system is the Lys162. NAD(+) is bound by residues 176–179 (KPSE) and 229–232 (SVPT). Leu244 is a K(+) binding site. The active-site Proton acceptor is the Glu250. NAD(+) is bound by residues Gly252, Cys284, and Glu384. The active-site Nucleophile is Cys284. At Cys284 the chain carries Cysteine sulfenic acid (-SOH). 2 residues coordinate K(+): Lys454 and Gly457. The active-site Charge relay system is the Glu461.

The protein belongs to the aldehyde dehydrogenase family. Dimer of dimers. It depends on K(+) as a cofactor.

The catalysed reaction is betaine aldehyde + NAD(+) + H2O = glycine betaine + NADH + 2 H(+). Its pathway is amine and polyamine biosynthesis; betaine biosynthesis via choline pathway; betaine from betaine aldehyde: step 1/1. In terms of biological role, involved in the biosynthesis of the osmoprotectant glycine betaine. Catalyzes the irreversible oxidation of betaine aldehyde to the corresponding acid. This is Betaine aldehyde dehydrogenase from Rhizobium etli (strain CIAT 652).